Consider the following 506-residue polypeptide: Trans-cinnamate 4-monooxygenase (506 aa).

The helical transmembrane segment at 3–23 (DFVLLEKALLGLFIATIVAIT) threads the bilayer. Residues 214–219 (RSRLAQ) and alanine 307 contribute to the (E)-cinnamate site. A heme-binding site is contributed by cysteine 448.

The protein belongs to the cytochrome P450 family. It depends on heme as a cofactor.

Its subcellular location is the membrane. The enzyme catalyses (E)-cinnamate + reduced [NADPH--hemoprotein reductase] + O2 = (E)-4-coumarate + oxidized [NADPH--hemoprotein reductase] + H2O + H(+). It functions in the pathway phenylpropanoid metabolism; trans-4-coumarate biosynthesis; trans-4-coumarate from trans-cinnamate: step 1/1. Catalyzes the first oxidative step of the phenylpropanoid pathway in higher plants by transforming trans-cinnamate into p-coumarate. The compounds formed by this pathway are essential components for lignification, pollination, and defense against ultraviolet light, predators and pathogens. The protein is Trans-cinnamate 4-monooxygenase (CYP73A10) of Petroselinum crispum (Parsley).